Consider the following 626-residue polypeptide: MLKKQVFYGILLICAFVCIYGEDEDEKEAQDEYQPPTVLVALLVRNKAHILPMFLSYLEQQDYPKDRIAFWLRCDHSSDDSIDLLKQWLKHSGDLYHSVNYAFDSDGPHGYQNESSPYDWTVSRFKHVIALKEEAFTYARDIWADFVFFLDADVLLTSQQALRTLTALRLPIVAPMLLSESLYSNFWCGMTEEYYYQRTDEYKEIYHVKKQGSFPVPMVHTAVLVDMNHKGARNLTFDRQRLRDIQQSNQQLDQPLYEGPADDIIVFAMSANSSGIPLHVCNELTFGYILQPLEPGDTLEQDLQMLLNIRASMVSDLGAVPPVLEYFQPLIKTPEKTKLTLDHIFMINLERRPERRQKMENLFEEIGLQVEHFPAVDGKELNADRVQEMGIRFLPGYEDPYHHRAMTMGEIGCFLSHYRIWVRMVQLELKEVLILEDDIRFDPYFRANAVRVLNQARSVVEYDLIYFGRKRLKEESEPWVADADSLVHAGYSYWTLGYVLSLQGALKLLAAKPLEKLIPVDEFLPVMFDRHPNKTWTAAFKKRDLIALSAAPLLLYPIHYTGESGYISDTEDSQQINVQTTEGVARLKSDREQVFVKKGDDGILEQQLKMGESLSNVLPGKTHQEL.

The N-terminal stretch at 1–21 (MLKKQVFYGILLICAFVCIYG) is a signal peptide. Asparagine 113, asparagine 234, asparagine 272, and asparagine 533 each carry an N-linked (GlcNAc...) asparagine glycan. The Prevents secretion from ER motif lies at 623–626 (HQEL).

This sequence belongs to the glycosyltransferase 25 family.

Its subcellular location is the endoplasmic reticulum lumen. The chain is Glycosyltransferase 25 family member from Drosophila pseudoobscura pseudoobscura (Fruit fly).